A 2024-amino-acid chain; its full sequence is MATGGGPFEDGMNDQDLPNWSNENVDDRLNNMDWGAQQKKANRSSEKNKKKFGVESDKRVTNDISPESSPGVGRRRTKTPHTFPHSRYMSQMSVPEQAELEKLKQRINFSDLDQRSIGSDSQGRATAANNKRQLSENRKPFNFLPMQINTNKSKDASTNPPNRETIGSAQCKELFASALSNDLLQNCQVSEEDGRGEPAMESSQIVSRLVQIRDYITKASSMREDLVEKNERSANVERLTHLIDHLKEQEKSYMKFLKKILARDPQQEPMEEIENLKKQHDLLKRMLQQQEQLRALQGRQAALLALQHKAEQAIAVMDDSVVAETAGSLSGVSITSELNEELNDLIQRFHNQLRDSQPPAVPDNRRQAESLSLTREVSQSRKPSASERLPDEKVELFSKMRVLQEKKQKMDKLLGELHTLRDQHLNNSSSSPQRSVDQRSTSAPSASVGLAPVVNGESNSLTSSVPYPTASLVSQNESENEGHLNPSEKLQKLNEVRKRLNELRELVHYYEQTSDMMTDAVNENRKDEETEESEYDSEHENSEPVTNIRNPQVASTWNEVNSHSNAQCVSNNRDGRTVNSNCEINNRSAANIRALNMPPSLDCRYNREGEQEIHVAQGEDDEEEEEEAEEEGVSGASLSSHRSSLVDEHPEDAEFEQKINRLMAAKQKLRQLQDLVAMVQDDDAAQGVISASASNLDDFYPAEEDTKQNSNNTRGNANKTQKDTGVNEKAREKFYEAKLQQQQRELKQLQEERKKLIDIQEKIQALQTACPDLQLSAASVGNCPTKKYMPAVTSTPTVNQHETSTSKSVFEPEDSSIVDNELWSEMRRHEMLREELRQRRKQLEALMAEHQRRQGLAETASPVAVSLRSDGSENLCTPQQSRTEKTMATWGGSTQCALDEEGDEDGYLSEGIVRTDEEEEEEQDASSNDNFSVCPSNSVNHNSYNGKETKNRWKNNCPFSADENYRPLAKTRQQNISMQRQENLRWVSELSYVEEKEQWQEQINQLKKQLDFSVSICQTLMQDQQTLSCLLQTLLTGPYSVMPSNVASPQVHFIMHQLNQCYTQLTWQQNNVQRLKQMLNELMRQQNQHPEKPGGKERGSSASHPPSPSLFCPFSFPTQPVNLFNIPGFTNFSSFAPGMNFSPLFPSNFGDFSQNISTPSEQQQPLAQNSSGKTEYMAFPKPFESSSSIGAEKPRNKKLPEEEVESSRTPWLYEQEGEVEKPFIKTGFSVSVEKSTSSNRKNQLDTNGRRRQFDEESLESFSSMPDPVDPTTVTKTFKTRKASAQASLASKDKTPKSKSKKRNSTQLKSRVKNIRYESASMSSTCEPCKSRNRHSAQTEEPVQAKVFSRKNHEQLEKIIKCNRSTEISSETGSDFSMFEALRDTIYSEVATLISQNESRPHFLIELFHELQLLNTDYLRQRALYALQDIVSRHISESHEKGENVKSVNSGTWIASNSELTPSESLATTDDETFEKNFERETHKISEQNDADNASVLSVSSNFEPFATDDLGNTVIHLDQALARMREYERMKTEAESNSNMRCTCRIIEDGDGAGAGTTVNNLEETPVIENRSSQQPVSEVSTIPCPRIDTQQLDRQIKAIMKEVIPFLKEHMDEVCSSQLLTSVRRMVLTLTQQNDESKEFVKFFHKQLGSILQDSLAKFAGRKLKDCGEDLLVEISEVLFNELAFFKLMQDLDNNSITVKQRCKRKIEATGVIQSCAKEAKRILEDHGSPAGEIDDEDKDKDETETVKQTQTSEVYDGPKNVRSDISDQEEDEESEGCPVSINLSKAETQALTNYGSGEDENEDEEMEEFEEGPVDVQTSLQANTEATEENEHDEQVLQRDFKKTAESKNVPLEREATSKNDQNNCPVKPCYLNILEDEQPLNSAAHKESPPTVDSTQQPNPLPLRLPEMEPLVPRVKEVKSAQETPESSLAGSPDTESPVLVNDYEAESGNISQKSDEEDFVKVEDLPLKLTIYSEADLRKKMVEEEQKNHLSGEICEMQTEELAGNSETLKEPETVGAQSI.

Positions Met-1–Met-92 are disordered. Ala-2 is modified (N-acetylalanine). The segment at Ala-2–Thr-1460 is mediates interaction with DZIP1. The segment covering Arg-43 to Thr-61 has biased composition (basic and acidic residues). Ser-65, Ser-68, Ser-69, Ser-93, Ser-110, Ser-116, and Ser-119 each carry phosphoserine. The interval Asp-111–Arg-163 is disordered. 2 stretches are compositionally biased toward polar residues: residues Ser-116 to Arg-132 and Gln-147 to Arg-163. Position 159 is a phosphoserine; in variant Ser-159 (Asn-159). Positions Lys-218 to Ala-301 form a coiled coil. The tract at residues Arg-354 to Glu-392 is disordered. The span at Glu-369–Pro-383 shows a compositional bias: polar residues. Ser-370 carries the phosphoserine modification. The residue at position 372 (Ser-372) is a Phosphoserine; by PLK4. Ser-384 is subject to Phosphoserine. Lys-399 carries the N6-acetyllysine modification. Positions Met-400–His-424 form a coiled coil. 2 disordered regions span residues Arg-421–Lys-492 and Glu-523–Ile-548. 2 stretches are compositionally biased toward polar residues: residues Leu-425–Ser-445 and Gly-456–Glu-477. A coiled-coil region spans residues Ser-487–Glu-543. Phosphoserine is present on Ser-588. Disordered stretches follow at residues His-614 to Asp-652 and Phe-699 to Val-726. Positions Gly-618–Gly-632 are enriched in acidic residues. The span at Ser-634–Ser-643 shows a compositional bias: low complexity. Position 643 is a phosphoserine (Ser-643). Positions Glu-651–Asp-682 form a coiled coil. Residues Gln-708 to Lys-719 are compositionally biased toward polar residues. 2 coiled-coil regions span residues Val-726–Ala-769 and Ser-824–Glu-858. A Phosphothreonine modification is found at Thr-859. A phosphoserine mark is found at Ser-861, Ser-866, Ser-869, and Ser-872. Thr-877 carries the post-translational modification Phosphothreonine. Residues Thr-915–Lys-947 form a disordered region. The segment covering Ala-925 to Gly-946 has biased composition (polar residues). Ser-960, Ser-977, Ser-988, and Ser-991 each carry phosphoserine. Residues Thr-1063–His-1089 are a coiled coil. 2 disordered regions span residues Gln-1085 to Ser-1109 and Phe-1152 to Trp-1211. A compositionally biased stretch (basic and acidic residues) spans His-1089 to Gly-1099. The span at Phe-1152–Lys-1173 shows a compositional bias: polar residues. Ser-1185 and Ser-1188 each carry phosphoserine. Residues Glu-1192 to Glu-1201 are compositionally biased toward basic and acidic residues. 2 positions are modified to phosphoserine: Ser-1229 and Ser-1231. Over residues Val-1232–Thr-1246 the composition is skewed to polar residues. Positions Val-1232–Val-1342 are disordered. A phosphoserine mark is found at Ser-1257, Ser-1260, Ser-1262, and Ser-1263. The interval Thr-1279–Gly-1799 is interaction with HAP1. Basic residues predominate over residues Lys-1296 to Asn-1313. A phosphoserine mark is found at Ser-1318 and Ser-1320. Thr-1468 carries the phosphothreonine modification. The stretch at Ile-1515–Asn-1539 forms a coiled coil. Ser-1573, Ser-1697, Ser-1730, Ser-1765, Ser-1768, Ser-1776, and Ser-1782 each carry phosphoserine. 2 disordered regions span residues Leu-1725 to Pro-1868 and Glu-1880 to Val-1944. Residues Ser-1768–Glu-1777 show a composition bias toward acidic residues. Polar residues predominate over residues Ile-1783–Gly-1797. A compositionally biased stretch (acidic residues) spans Gly-1799–Pro-1815. Over residues Val-1818–Glu-1827 the composition is skewed to polar residues. Residues Asp-1835 to Ser-1860 are compositionally biased toward basic and acidic residues. Positions Pro-1905–Pro-1916 are enriched in low complexity. Positions Pro-1913–Ile-2024 are interaction with BBS4. The span at Ala-1924–Ala-1933 shows a compositional bias: polar residues. Phosphoserine occurs at positions 1958 and 1977. The segment at Glu-2005–Ile-2024 is disordered.

It belongs to the PCM1 family. Self-associates. Interacts with C2CD3. Interacts with BBS4, BBS8, CETN3, HAP1, NDE1, NDEL1, MAP1LC3B, GABARAPAL2, and GABARAP. Interacts with CEP131; the interaction increases in response to ultraviolet light (UV) radiation. Associates with microtubule; association to microtubule is reduced in response to cellular stress, such as ultraviolet light (UV) radiation or heat shock, in a process that requires p38 MAP kinase signaling. Interacts with CFAP263. Interacts with SSX2IP. Interacts with CCDC13. Interacts with CEP290. Interacts with PARD6A. Interacts with KIAA0753/OFIP, CEP20/FOR20 and OFD1; the interaction with CEP20/FOR20 and OFD1 may be mediated by KIAA0753/OFIP. Interacts with CCDC66. Interacts with CCDC61. Interacts with DZIP1; localizes DZIP1 and the associated BBSome to centriolar satellite. Interacts with CSTPP1, TTLL1, TPGS1 and LRRC49. Interacts with CFAP53. In terms of processing, ubiquitinated. Undergoes monoubiquitination catalyzed by the E3 ubiquitin-protein ligase MIB1 in proliferating cells, preventing cilia formation. Monoubiquitination by MIB1 is inhibited in response to cellular stress, such as ultraviolet light (UV) radiation or heat shock, resulting in cilia formation initiation. Variant Ser-159 is phosphorylated. Post-translationally, phosphorylated on multiple serine and threonine residues by DYRK3 during the G2-to-M transition, after the nuclear-envelope breakdown. Phosphorylation by DYRK3 promotes disassembly of pericentriolar material. Phosphorylation at Ser-372 mediated by PLK4 is required to maintain the integrity of centriolar satellites. As to expression, expressed in blood, bone marrow, breast, lymph node, ovary and thyroid.

It localises to the cytoplasm. Its subcellular location is the cytoskeleton. The protein localises to the microtubule organizing center. It is found in the centrosome. The protein resides in the cytoplasmic granule. It localises to the centriolar satellite. Its subcellular location is the cilium basal body. Its function is as follows. Required for centrosome assembly and function. Essential for the correct localization of several centrosomal proteins including CEP250, CETN3, PCNT and NEK2. Required to anchor microtubules to the centrosome. Also involved in cilium biogenesis by recruiting the BBSome, a ciliary protein complex involved in cilium biogenesis, to the centriolar satellites. Recruits the tubulin polyglutamylase complex (TPGC) to centriolar satellites. This chain is Pericentriolar material 1 protein, found in Homo sapiens (Human).